A 316-amino-acid polypeptide reads, in one-letter code: Taste receptor type 2 member 3 (316 aa).

Topologically, residues 1-7 (MLGFTEG) are extracellular. A helical membrane pass occupies residues 8–28 (IFLVLTVTEFILGNLVNGFIV). Residues 29 to 50 (SVNGSHWFKSKKISLSDFIITS) are Cytoplasmic-facing. A helical membrane pass occupies residues 51-71 (LALFRIFLLWIIFTDSLIIVF). Topologically, residues 72-86 (SYHTHDSGIRMQLID) are extracellular. A helical transmembrane segment spans residues 87-107 (VFWTFTNHFSIWLISCLSVFY). Over 108–128 (CLKIATFSHPSFLWLKWRASR) the chain is Cytoplasmic. Residues 129–149 (VVVGMLWGALVLSCVCTMSLM) traverse the membrane as a helical segment. At 150 to 186 (NEFKIYSALTGSRDTQNMTEYIRLKRHEYNLMHVLGN) the chain is on the extracellular side. Asn166 is a glycosylation site (N-linked (GlcNAc...) asparagine). Residues 187 to 207 (LWKIPSLIVSLIAYFLLLLSL) form a helical membrane-spanning segment. The Cytoplasmic segment spans residues 208 to 234 (GKHTQQMQKYSVGSRDQSAEAHRRAMR). A helical transmembrane segment spans residues 235–255 (IILSFLLFFLFYFLSFVILSS). Topologically, residues 256–266 (SRFLPETKIAR) are extracellular. The chain crosses the membrane as a helical span at residues 267–287 (IIGVVITMSYLVGDSLILILG). Residues 288–316 (NNKLKQTFVAILPCECGHPKPGSKRFFAS) are Cytoplasmic-facing.

The protein belongs to the G-protein coupled receptor T2R family.

The protein localises to the membrane. Its function is as follows. Gustducin-coupled receptor implicated in the perception of bitter compounds in the oral cavity and the gastrointestinal tract. Signals through PLCB2 and the calcium-regulated cation channel TRPM5. This is Taste receptor type 2 member 3 from Rattus norvegicus (Rat).